The chain runs to 680 residues: DNA-directed RNA polymerase subunit beta' (680 aa).

Positions 69, 71, 87, and 90 each coordinate Zn(2+). 3 residues coordinate Mg(2+): aspartate 489, aspartate 491, and aspartate 493.

Belongs to the RNA polymerase beta' chain family. RpoC1 subfamily. As to quaternary structure, in plastids the minimal PEP RNA polymerase catalytic core is composed of four subunits: alpha, beta, beta', and beta''. When a (nuclear-encoded) sigma factor is associated with the core the holoenzyme is formed, which can initiate transcription. Mg(2+) serves as cofactor. Zn(2+) is required as a cofactor.

It localises to the plastid. The protein resides in the chloroplast. It catalyses the reaction RNA(n) + a ribonucleoside 5'-triphosphate = RNA(n+1) + diphosphate. DNA-dependent RNA polymerase catalyzes the transcription of DNA into RNA using the four ribonucleoside triphosphates as substrates. This chain is DNA-directed RNA polymerase subunit beta', found in Nandina domestica (Heavenly bamboo).